Reading from the N-terminus, the 705-residue chain is Prolyl endopeptidase (705 aa).

An N-terminal signal peptide occupies residues 1-20 (MKYKKLSVAVAAFAFAAVSA). Residues serine 556 and histidine 675 each act as charge relay system in the active site.

Belongs to the peptidase S9A family. Monomer.

Its subcellular location is the periplasm. It carries out the reaction Hydrolysis of Pro-|-Xaa &gt;&gt; Ala-|-Xaa in oligopeptides.. Its function is as follows. Cleaves peptide bonds on the C-terminal side of prolyl residues within peptides that are up to approximately 30 amino acids long. Has an absolute requirement for an X-Pro bond in the trans configuration immediately preceding the Pro-Y scissible bond. The sequence is that of Prolyl endopeptidase from Elizabethkingia miricola (Chryseobacterium miricola).